The sequence spans 316 residues: ATP synthase gamma chain (316 aa).

This sequence belongs to the ATPase gamma chain family. As to quaternary structure, F-type ATPases have 2 components, CF(1) - the catalytic core - and CF(0) - the membrane proton channel. CF(1) has five subunits: alpha(3), beta(3), gamma(1), delta(1), epsilon(1). CF(0) has three main subunits: a, b and c.

The protein resides in the cellular thylakoid membrane. In terms of biological role, produces ATP from ADP in the presence of a proton gradient across the membrane. The gamma chain is believed to be important in regulating ATPase activity and the flow of protons through the CF(0) complex. The protein is ATP synthase gamma chain of Prochlorococcus marinus (strain MIT 9215).